Reading from the N-terminus, the 298-residue chain is Protoheme IX farnesyltransferase (298 aa).

Transmembrane regions (helical) follow at residues 26–46, 48–68, 110–130, 147–167, 174–194, 220–240, 243–263, and 276–296; these read IVIL…GGPP, LGLT…ANAI, FLVL…GLLF, IVIG…AVTG, VIMF…LALF, ILLY…TGTV, LYLW…VGLL, and TYGW…LDVT.

It belongs to the UbiA prenyltransferase family. Protoheme IX farnesyltransferase subfamily. Interacts with CtaA.

The protein resides in the cell membrane. It catalyses the reaction heme b + (2E,6E)-farnesyl diphosphate + H2O = Fe(II)-heme o + diphosphate. Its pathway is porphyrin-containing compound metabolism; heme O biosynthesis; heme O from protoheme: step 1/1. In terms of biological role, converts heme B (protoheme IX) to heme O by substitution of the vinyl group on carbon 2 of heme B porphyrin ring with a hydroxyethyl farnesyl side group. The sequence is that of Protoheme IX farnesyltransferase from Symbiobacterium thermophilum (strain DSM 24528 / JCM 14929 / IAM 14863 / T).